A 361-amino-acid chain; its full sequence is Rhomboid domain-containing protein 2 (361 aa).

5 helical membrane passes run 19 to 39, 63 to 83, 100 to 120, 158 to 178, and 182 to 202; these read SATF…LFLL, LVTY…AIII, CFFT…FESV, FGVV…SWLI, and SFLS…TYCY. Disordered stretches follow at residues 265–287 and 318–361; these read PSYP…PPGH and PASA…VAMP. Composition is skewed to polar residues over residues 267-276 and 318-328; these read YPVTQMQHAS and PASAGTSQGVQ.

This sequence belongs to the peptidase S54 family. As to quaternary structure, might form homotrimers; these trimers are only formed in retina. Widely expressed, including in retina and brain (at protein level), as well as in kidney, testis and ovary. Expressed in all layers of the retina, including inner segments of photoreceptor cells and ganglion cells (at protein level).

It is found in the golgi apparatus. The protein localises to the cis-Golgi network membrane. The sequence is that of Rhomboid domain-containing protein 2 (Rhbdd2) from Mus musculus (Mouse).